A 191-amino-acid polypeptide reads, in one-letter code: Fe/S biogenesis protein NfuA (191 aa).

[4Fe-4S] cluster is bound by residues C149 and C152.

This sequence belongs to the NfuA family. In terms of assembly, homodimer. It depends on [4Fe-4S] cluster as a cofactor.

In terms of biological role, involved in iron-sulfur cluster biogenesis. Binds a 4Fe-4S cluster, can transfer this cluster to apoproteins, and thereby intervenes in the maturation of Fe/S proteins. Could also act as a scaffold/chaperone for damaged Fe/S proteins. This chain is Fe/S biogenesis protein NfuA, found in Photorhabdus laumondii subsp. laumondii (strain DSM 15139 / CIP 105565 / TT01) (Photorhabdus luminescens subsp. laumondii).